A 116-amino-acid polypeptide reads, in one-letter code: Nicotine metabolites export pump subunit NepA (116 aa).

Helical transmembrane passes span 10 to 30, 42 to 62, 67 to 87, and 92 to 112; these read LTIW…TSLL, TVAV…ILKF, IAYA…GVLF, and FSWK…TLNL.

It belongs to the drug/metabolite transporter (DMT) superfamily. Small multidrug resistance (SMR) (TC 2.A.7.1) family. NepA/NepB subfamily. In terms of assembly, the efflux pump is composed of NepA and NepB.

It is found in the cell membrane. Its function is as follows. Component of an efflux pump responsible for the transport of nicotine breakdown products, in particular methylamine, out of the cell. This pump apparently serves as a metabolic valve for nicotine catabolites and may protect the bacteria from the potentially toxic side effects of these compounds. This chain is Nicotine metabolites export pump subunit NepA (nepA), found in Paenarthrobacter nicotinovorans (Arthrobacter nicotinovorans).